A 366-amino-acid polypeptide reads, in one-letter code: tRNA-specific 2-thiouridylase MnmA (366 aa).

Residues 6 to 13 (AMSGGVDS) and leucine 32 each bind ATP. Cysteine 101 serves as the catalytic Nucleophile. Cysteine 101 and cysteine 198 are joined by a disulfide. Residue glycine 125 participates in ATP binding. Residues 148 to 150 (KDQ) are interaction with tRNA. Cysteine 198 (cysteine persulfide intermediate) is an active-site residue.

Belongs to the MnmA/TRMU family.

It is found in the cytoplasm. It carries out the reaction S-sulfanyl-L-cysteinyl-[protein] + uridine(34) in tRNA + AH2 + ATP = 2-thiouridine(34) in tRNA + L-cysteinyl-[protein] + A + AMP + diphosphate + H(+). Functionally, catalyzes the 2-thiolation of uridine at the wobble position (U34) of tRNA, leading to the formation of s(2)U34. This Nocardioides sp. (strain ATCC BAA-499 / JS614) protein is tRNA-specific 2-thiouridylase MnmA.